A 250-amino-acid chain; its full sequence is Proteasome subunit alpha type-4-A (250 aa).

Glycyl lysine isopeptide (Lys-Gly) (interchain with G-Cter in ubiquitin) cross-links involve residues K40 and K64.

It belongs to the peptidase T1A family. Component of the 20S core complex of the 26S proteasome. The 26S proteasome is composed of a core protease (CP), known as the 20S proteasome, capped at one or both ends by the 19S regulatory particle (RP/PA700). The 20S proteasome core is composed of 28 subunits that are arranged in four stacked rings, resulting in a barrel-shaped structure. The two end rings are each formed by seven alpha subunits, and the two central rings are each formed by seven beta subunits. The catalytic chamber with the active sites is on the inside of the barrel. Ubiquitous low levels, higher expression in siliques and flowers.

The protein localises to the cytoplasm. Its subcellular location is the nucleus. Functionally, the proteasome is a multicatalytic proteinase complex which is characterized by its ability to cleave peptides with Arg, Phe, Tyr, Leu, and Glu adjacent to the leaving group at neutral or slightly basic pH. The proteasome has an ATP-dependent proteolytic activity. This is Proteasome subunit alpha type-4-A (PAC1) from Arabidopsis thaliana (Mouse-ear cress).